Reading from the N-terminus, the 326-residue chain is Eukaryotic translation initiation factor 3 subunit I (326 aa).

WD repeat units lie at residues 8-47, 50-89, 145-184, 188-227, and 285-326; these read GHER…RLGT, GHQG…VIAS, MVES…KVVD, DHAA…CLKT, and GHFG…NIFE.

This sequence belongs to the eIF-3 subunit I family. In terms of assembly, component of the eukaryotic translation initiation factor 3 (eIF-3) complex. The eIF-3 complex interacts with pix.

Its subcellular location is the cytoplasm. Its function is as follows. Component of the eukaryotic translation initiation factor 3 (eIF-3) complex, which is involved in protein synthesis of a specialized repertoire of mRNAs and, together with other initiation factors, stimulates binding of mRNA and methionyl-tRNAi to the 40S ribosome. The eIF-3 complex specifically targets and initiates translation of a subset of mRNAs involved in cell proliferation. The sequence is that of Eukaryotic translation initiation factor 3 subunit I from Drosophila grimshawi (Hawaiian fruit fly).